Consider the following 210-residue polypeptide: Uracil phosphoribosyltransferase (210 aa).

5-phospho-alpha-D-ribose 1-diphosphate-binding positions include Arg-78, Arg-103, and 130 to 138; that span reads DPMLATGGS. Uracil contacts are provided by residues Ile-195 and 200 to 202; that span reads GDA. Asp-201 contributes to the 5-phospho-alpha-D-ribose 1-diphosphate binding site.

The protein belongs to the UPRTase family. Mg(2+) serves as cofactor.

It carries out the reaction UMP + diphosphate = 5-phospho-alpha-D-ribose 1-diphosphate + uracil. It participates in pyrimidine metabolism; UMP biosynthesis via salvage pathway; UMP from uracil: step 1/1. Allosterically activated by GTP. Its function is as follows. Catalyzes the conversion of uracil and 5-phospho-alpha-D-ribose 1-diphosphate (PRPP) to UMP and diphosphate. This Leifsonia xyli subsp. xyli (strain CTCB07) protein is Uracil phosphoribosyltransferase.